The primary structure comprises 140 residues: Cytochrome c-type biogenesis protein CcmE (140 aa).

The Cytoplasmic segment spans residues 1 to 7 (MTKRQNR). A helical; Signal-anchor for type II membrane protein membrane pass occupies residues 8 to 28 (MVLVALLVIGVSLAGYLGLKA). Over 29–140 (FNENLLYFLS…DALEKAKNKQ (112 aa)) the chain is Periplasmic. Heme-binding residues include His-120 and Tyr-124.

This sequence belongs to the CcmE/CycJ family.

Its subcellular location is the cell inner membrane. Its function is as follows. Heme chaperone required for the biogenesis of c-type cytochromes. Transiently binds heme delivered by CcmC and transfers the heme to apo-cytochromes in a process facilitated by CcmF and CcmH. The protein is Cytochrome c-type biogenesis protein CcmE of Vesicomyosocius okutanii subsp. Calyptogena okutanii (strain HA).